Here is a 224-residue protein sequence, read N- to C-terminus: Glutathione S-transferase U28 (224 aa).

A GST N-terminal domain is found at 6–85 (SKVVVLDFWA…YIDETWTDAA (80 aa)). Residues 16–17 (SP), 42–43 (NK), 56–57 (KV), and 69–70 (ES) contribute to the glutathione site. In terms of domain architecture, GST C-terminal spans 91-217 (DPQSRATARF…EKVYQQVLKL (127 aa)). T154 bears the Phosphothreonine mark.

This sequence belongs to the GST superfamily. Tau family.

Its subcellular location is the cytoplasm. It is found in the cytosol. The enzyme catalyses RX + glutathione = an S-substituted glutathione + a halide anion + H(+). Its function is as follows. May be involved in the conjugation of reduced glutathione to a wide number of exogenous and endogenous hydrophobic electrophiles and have a detoxification role against certain herbicides. The polypeptide is Glutathione S-transferase U28 (GSTU28) (Arabidopsis thaliana (Mouse-ear cress)).